The primary structure comprises 326 residues: Vitamin B12 import system permease protein BtuC (326 aa).

A run of 9 helical transmembrane segments spans residues 19-39 (LSVL…LWIL), 61-81 (LAVL…QALF), 88-108 (PGLL…VLLG), 112-132 (LPNW…TLIL), 146-166 (LLAG…AIYF), 184-204 (GGVD…LLWI), 240-260 (GWMV…GLVI), 274-294 (VLLP…DIVA), and 302-322 (ELPI…WLLL).

Belongs to the binding-protein-dependent transport system permease family. FecCD subfamily. As to quaternary structure, the complex is composed of two ATP-binding proteins (BtuD), two transmembrane proteins (BtuC) and a solute-binding protein (BtuF).

Its subcellular location is the cell inner membrane. Functionally, part of the ABC transporter complex BtuCDF involved in vitamin B12 import. Involved in the translocation of the substrate across the membrane. In Escherichia coli O127:H6 (strain E2348/69 / EPEC), this protein is Vitamin B12 import system permease protein BtuC.